Reading from the N-terminus, the 262-residue chain is Urease accessory protein UreD (262 aa).

It belongs to the UreD family. UreD, UreF and UreG form a complex that acts as a GTP-hydrolysis-dependent molecular chaperone, activating the urease apoprotein by helping to assemble the nickel containing metallocenter of UreC. The UreE protein probably delivers the nickel.

The protein localises to the cytoplasm. Its function is as follows. Required for maturation of urease via the functional incorporation of the urease nickel metallocenter. The sequence is that of Urease accessory protein UreD from Acetivibrio thermocellus (strain ATCC 27405 / DSM 1237 / JCM 9322 / NBRC 103400 / NCIMB 10682 / NRRL B-4536 / VPI 7372) (Clostridium thermocellum).